Here is a 516-residue protein sequence, read N- to C-terminus: Cyclic AMP response element-binding protein A (516 aa).

A phosphoserine mark is found at serine 75, serine 79, and serine 82. 3 disordered regions span residues 213 to 237, 294 to 338, and 353 to 408; these read KDEP…SQHQ, KSEK…HLFA, and PAGG…KGST. The segment covering 221-237 has biased composition (low complexity); the sequence is SSCPASPTSQASSSQHQ. Over residues 361–392 the composition is skewed to low complexity; that stretch reads RVSRTAASITRSSSGSASASGSSTSSTVTTTR. The bZIP domain maps to 441 to 504; it reads SLKKIRRKIK…ANLLSQLHKL (64 aa). Residues 443–463 form a basic motif region; that stretch reads KKIRRKIKNKISAQESRRKKK. A leucine-zipper region spans residues 469–476; sequence LERRVEIL.

The protein belongs to the bZIP family. As to quaternary structure, may bind DNA as heterodimers with other bZIP proteins. In terms of tissue distribution, in all cell types examined, including developing salivary gland in embryos and in adults, brain and optic lobe cell bodies, salivary gland, midgut epithelial cells of the cardia, female ovarian columnar follicle cells and male seminal vesicle, ejaculatory duct, and ejaculatory bulb.

The protein resides in the nucleus. Its function is as follows. Transcriptional activator. Binds to fat body-specific enhancers of alcohol dehydrogenase (ADH) and yolk protein genes. BBF-2 may play a role in fat body gene expression. It binds the consensus sequence 5'-T[AC]NACGTAN[TG]C-3'. The polypeptide is Cyclic AMP response element-binding protein A (CrebA) (Drosophila melanogaster (Fruit fly)).